Consider the following 297-residue polypeptide: MAAPQLFRALVSAQWVAEALKSPRASQPLKLLDASWYLPKLGRDARREFEERHIPGAAFFDIDRCSDHTSPYDHMLPSATHFADYAGSLGVSAATHVVIYDGSDQGLYSAPRVWWMFRAFGHHSVSLLDGGFRYWLSQNLPISSGKSPSEPAEFCAQLDPSFIKTHEDILENLDARRFQVVDARAAGRFQGTQPEPRDGIEPGHIPGSVNIPFTEFLTSEGLEKSPEEIQRLFQEKKVDLSKPLVATCGSGVTACHVVLGAFLCGKPDVPVYDGSWVEWYMRAQPEHVISQGRGKTL.

The residue at position 2 (Ala2) is an N-acetylalanine. One can recognise a Rhodanese 1 domain in the interval 25-144 (ASQPLKLLDA…WLSQNLPISS (120 aa)). Ser35 is subject to Phosphoserine. Lys40 carries the N6-acetyllysine; alternate modification. Lys40 bears the N6-succinyllysine; alternate mark. The interval 145-160 (GKSPSEPAEFCAQLDP) is hinge. 2 positions are modified to N6-succinyllysine: Lys146 and Lys164. Residues 174 to 288 (DARRFQVVDA…WYMRAQPEHV (115 aa)) enclose the Rhodanese 2 domain. Arg188 contributes to the substrate binding site. The Cysteine persulfide intermediate role is filled by Cys248.

Monomer (active form). Homodimer; disulfide-linked (inactive form). Post-translationally, the N-terminus is blocked. As to expression, expressed in liver, heart, kidney and brain. Localizes to tubular epithelium in the kidney, pericentral hepatocytes in the liver, cardiac cells in the heart and neuroglial cells in the brain. Also expressed in vascular endothelium of the thoracic aorta. Weak expression in lung and thymus.

The protein localises to the cytoplasm. The protein resides in the mitochondrion. It is found in the synapse. Its subcellular location is the synaptosome. The enzyme catalyses 2-oxo-3-sulfanylpropanoate + [thioredoxin]-dithiol = [thioredoxin]-disulfide + hydrogen sulfide + pyruvate + H(+). By oxidative stress, and thioredoxin. Under oxidative stress conditions, the catalytic cysteine site is converted to a sulfenate which inhibits the MPST enzyme activity. Reduced thioredoxin cleaves an intersubunit disulfide bond to turn on the redox switch and reactivate the enzyme. Inhibited by different oxidants, hydrogen peroxide and tetrathionate. Its function is as follows. Transfer of a sulfur ion to cyanide or to other thiol compounds. Also has weak rhodanese activity. Detoxifies cyanide and is required for thiosulfate biosynthesis. Acts as an antioxidant. In combination with cysteine aminotransferase (CAT), contributes to the catabolism of cysteine and is an important producer of hydrogen sulfide in the brain, retina and vascular endothelial cells. Hydrogen sulfide H(2)S is an important synaptic modulator, signaling molecule, smooth muscle contractor and neuroprotectant. Its production by the 3MST/CAT pathway is regulated by calcium ions. The polypeptide is 3-mercaptopyruvate sulfurtransferase (Mpst) (Rattus norvegicus (Rat)).